Here is a 122-residue protein sequence, read N- to C-terminus: Large ribosomal subunit protein bL12 (122 aa).

The interval 94-122 is disordered; that stretch reads GNVKEGLSKEDAEEMKEKLEEAGATVELK. Positions 99 to 114 are enriched in basic and acidic residues; sequence GLSKEDAEEMKEKLEE.

The protein belongs to the bacterial ribosomal protein bL12 family. In terms of assembly, homodimer. Part of the ribosomal stalk of the 50S ribosomal subunit. Forms a multimeric L10(L12)X complex, where L10 forms an elongated spine to which 2 to 4 L12 dimers bind in a sequential fashion. Binds GTP-bound translation factors.

Forms part of the ribosomal stalk which helps the ribosome interact with GTP-bound translation factors. Is thus essential for accurate translation. This chain is Large ribosomal subunit protein bL12, found in Halanaerobium praevalens.